Here is a 153-residue protein sequence, read N- to C-terminus: uncharacterized protein (153 aa).

This is an uncharacterized protein from Saccharomyces cerevisiae (strain ATCC 204508 / S288c) (Baker's yeast).